Here is a 221-residue protein sequence, read N- to C-terminus: N-(5'-phosphoribosyl)anthranilate isomerase (221 aa).

Belongs to the TrpF family.

It carries out the reaction N-(5-phospho-beta-D-ribosyl)anthranilate = 1-(2-carboxyphenylamino)-1-deoxy-D-ribulose 5-phosphate. The protein operates within amino-acid biosynthesis; L-tryptophan biosynthesis; L-tryptophan from chorismate: step 3/5. This Geobacillus thermodenitrificans (strain NG80-2) protein is N-(5'-phosphoribosyl)anthranilate isomerase.